Reading from the N-terminus, the 606-residue chain is RUN and FYVE domain-containing protein 2 (606 aa).

An RUN domain is found at 37 to 169 (DSDYPPLQQF…IDANLCVKGE (133 aa)). Positions 210–534 (EELNRQLNST…IKEANKALQG (325 aa)) form a coiled coil. The segment at 540-598 (DKEATHCKLCEKEFSLSKRKHHCRNCGEIFCNACSDNELPLPSSPKPVRVCDSCHALLI) adopts an FYVE-type zinc-finger fold. Zn(2+) is bound by residues C546, C549, C562, C565, C570, C573, C590, and C593.

In terms of assembly, interacts with BMX.

It localises to the nucleus. The sequence is that of RUN and FYVE domain-containing protein 2 (RUFY2) from Pongo abelii (Sumatran orangutan).